We begin with the raw amino-acid sequence, 173 residues long: MSLNDLNTLPGVTAQADPATAQFVFNHTMLRVKDIEKSLDFYTRVLGFKLVDKRDFVEAKFSLYFLALVDPATIPADDDARHQWMKSIPGVLELTHNHGTERDADFAYHHGNTDPRGFGHICVSVPDVVAACERFEALQVPFQKRLSDGRMNHLAFIKDPDGYWVEVIQPTPL.

In terms of domain architecture, VOC spans V24–P170. A Ni(2+)-binding site is contributed by H27. R31 provides a ligand contact to substrate. E93 lines the Ni(2+) pocket. Positions 97, 116, and 120 each coordinate substrate. Positions 120 and 166 each coordinate Ni(2+). The Proton donor/acceptor role is filled by E166.

This sequence belongs to the glyoxalase I family. As to quaternary structure, monomer. Ni(2+) serves as cofactor. The cofactor is Zn(2+).

The catalysed reaction is (R)-S-lactoylglutathione = methylglyoxal + glutathione. The protein operates within secondary metabolite metabolism; methylglyoxal degradation; (R)-lactate from methylglyoxal: step 1/2. Functionally, catalyzes the conversion of hemimercaptal, formed from methylglyoxal and glutathione, to S-lactoylglutathione. This is Lactoylglutathione lyase (gloA) from Pseudomonas putida (Arthrobacter siderocapsulatus).